The sequence spans 294 residues: Elongation factor Ts (294 aa).

The interval 82 to 85 is involved in Mg(2+) ion dislocation from EF-Tu; the sequence is TDFV.

It belongs to the EF-Ts family.

The protein localises to the cytoplasm. Associates with the EF-Tu.GDP complex and induces the exchange of GDP to GTP. It remains bound to the aminoacyl-tRNA.EF-Tu.GTP complex up to the GTP hydrolysis stage on the ribosome. This is Elongation factor Ts from Nitrosomonas eutropha (strain DSM 101675 / C91 / Nm57).